The sequence spans 436 residues: Trigger factor (436 aa).

The PPIase FKBP-type domain maps to glycine 161–proline 246.

Belongs to the FKBP-type PPIase family. Tig subfamily.

The protein localises to the cytoplasm. It catalyses the reaction [protein]-peptidylproline (omega=180) = [protein]-peptidylproline (omega=0). Functionally, involved in protein export. Acts as a chaperone by maintaining the newly synthesized protein in an open conformation. Functions as a peptidyl-prolyl cis-trans isomerase. The chain is Trigger factor from Aeromonas salmonicida (strain A449).